Reading from the N-terminus, the 619-residue chain is Replication restart protein PriA (619 aa).

Positions 119 to 285 (LKELQKHPAS…KDKALVRLKG (167 aa)) constitute a Helicase ATP-binding domain. 132–139 (GDTGSGKT) provides a ligand contact to ATP. Positions 228–231 (DEEH) match the DEAH box motif. Residues C336, C339, C345, C348, C363, C366, C376, and C379 each coordinate Zn(2+). One can recognise a Helicase C-terminal domain in the interval 371–532 (PIPKICNACQ…ELYPPFSRLC (162 aa)).

Belongs to the helicase family. PriA subfamily. Component of the replication restart primosome. Zn(2+) is required as a cofactor.

The enzyme catalyses Couples ATP hydrolysis with the unwinding of duplex DNA by translocating in the 3'-5' direction.. It catalyses the reaction ATP + H2O = ADP + phosphate + H(+). Functionally, initiates the restart of stalled replication forks, which reloads the replicative helicase on sites other than the origin of replication. Recognizes and binds to abandoned replication forks and remodels them to uncover a helicase loading site. Promotes assembly of the primosome at these replication forks. This chain is Replication restart protein PriA, found in Helicobacter pylori (strain J99 / ATCC 700824) (Campylobacter pylori J99).